Consider the following 114-residue polypeptide: Cystatin Pr17a (114 aa).

The signal sequence occupies residues 1-18 (MSCLKIITLFLFLAAVIA). Positions 31–109 (GAPEQINPND…QAWLKKTSVK (79 aa)) constitute a Cystatin domain. An intrachain disulfide couples Cys-93 to Cys-113.

It belongs to the cystatin family. Expressed by the venom gland (posterior main gland) (at protein level).

It is found in the secreted. The sequence is that of Cystatin Pr17a from Platymeris rhadamanthus (Red spot assassin bug).